The following is a 514-amino-acid chain: Cytochrome P450 monooxygenase aneD (514 aa).

A helical transmembrane segment spans residues 6–26; it reads ICTLLAVIATTSLGLLFLSII. Asn-113, Asn-261, and Asn-347 each carry an N-linked (GlcNAc...) asparagine glycan. Cys-424 provides a ligand contact to heme.

Belongs to the cytochrome P450 family. It depends on heme as a cofactor.

The protein resides in the membrane. The enzyme catalyses asperaculane D + reduced [NADPH--hemoprotein reductase] + O2 = asperaculane E + oxidized [NADPH--hemoprotein reductase] + H2O + H(+). Its pathway is secondary metabolite biosynthesis. Functionally, cytochrome P450 monooxygenase; part of the gene cluster that mediates the biosynthesis of aculenes, a unique type of norsesquiterpenes that contain a nordaucane skeleton linked to an L-proline moiety and are of mixed biosynthetic origin. The pathway begins with the synthesis of dauca-4,7-diene by the terpene cyclase aneC using farnesyl pyrophosphate (FPP) as substrate. The cytochrome P450 monooxygenase aneF then performs the initial oxidation at C-12 of dauca-4,7-diene to yield asperaculane D. Asperaculane D is substrate of the cytochrome P450 monooxygenase aneD for C-10 hydroxylation to yield asperaculane E. The cytochrome P450 monooxygenase aneG then converts asperaculane E into aculene D via C-2 oxidation. The monomodular nonribosomal peptide synthtase aneB adenylates L-proline and the thiohydrolase aneE transfers this activated L-proline derivative to aculenes D and C to produce respectively aculenes B and A. The dioxygenase aneA converts aculene D into aculene C, and aculene B into aculene A by introducing the 5,6-alkene moiety. Asperculanes A, B, C and F, as well as 14-prolyl asperculane C, might be shunt products of the pathway. The sequence is that of Cytochrome P450 monooxygenase aneD from Aspergillus aculeatus (strain ATCC 16872 / CBS 172.66 / WB 5094).